A 237-amino-acid polypeptide reads, in one-letter code: Uridylate kinase (237 aa).

12 to 15 (KLSG) lines the ATP pocket. Residues 20–25 (GDEGFG) are involved in allosteric activation by GTP. UMP is bound at residue Gly54. ATP is bound by residues Gly55 and Arg59. UMP-binding positions include Asp74 and 135–142 (TGSPFFTT). Residues Thr162, Tyr168, and Asp171 each contribute to the ATP site.

The protein belongs to the UMP kinase family. Homohexamer.

Its subcellular location is the cytoplasm. It carries out the reaction UMP + ATP = UDP + ADP. It participates in pyrimidine metabolism; CTP biosynthesis via de novo pathway; UDP from UMP (UMPK route): step 1/1. Its activity is regulated as follows. Allosterically activated by GTP. Inhibited by UTP. In terms of biological role, catalyzes the reversible phosphorylation of UMP to UDP. The protein is Uridylate kinase of Haemophilus ducreyi (strain 35000HP / ATCC 700724).